Here is a 411-residue protein sequence, read N- to C-terminus: MKKRKGLLIILDGLGDRPIKEFGGKTPLEYANTPNMDRLAKMGILGQQDPIKPGQPAGSDTAHLSIFGYDPYKVYRGRGFLEALGVGLDLNEDDLAFRVNFATIENGIITDRRAGRISTEEAHELAKAVQENVKLPVDFIFVGATGHRAVLVLRGMAKGYRVGENDPHEAGKPPQEFTWEDEESKKVAEILEEFVQKAHEVLDKHPINEKRRKEGKPPANYLLIRGAGTYPDIPMKFTEQWKVKAGAVIAVSLVKGVARAIGFDVYTPEGATGEYNTDVMAKAKKTVELLKDYDFVFLHFKPTDAAGHDNNPKLKAEMIEKADRMIGYILEHIDLEDVVIAITGDHSTPCEVMNHSGDPVPLLIAGGGVRPDHTESFGERECMRGGIGRIKGHDIVPIMMDLMNRSEKFGA.

The protein belongs to the BPG-independent phosphoglycerate mutase family. A-PGAM subfamily.

It carries out the reaction (2R)-2-phosphoglycerate = (2R)-3-phosphoglycerate. Its pathway is carbohydrate degradation; glycolysis; pyruvate from D-glyceraldehyde 3-phosphate: step 3/5. Functionally, catalyzes the interconversion of 2-phosphoglycerate and 3-phosphoglycerate. The polypeptide is 2,3-bisphosphoglycerate-independent phosphoglycerate mutase (Thermococcus kodakarensis (strain ATCC BAA-918 / JCM 12380 / KOD1) (Pyrococcus kodakaraensis (strain KOD1))).